A 381-amino-acid polypeptide reads, in one-letter code: Zinc finger CCCH domain-containing protein 61 (381 aa).

Positions 1-39 (MDVEHHKSGHISRPTVDIPPRKLLSSAKSPSSVSSPLRD) are disordered. Residues 21–37 (RKLLSSAKSPSSVSSPL) are compositionally biased toward low complexity. 2 consecutive C3H1-type zinc fingers follow at residues 101 to 128 (YTGEVCPEFSRHGDCSRGDECGFAHGVF) and 137 to 159 (YRTEACKDGKHCKRKVCFFAHSP).

In terms of assembly, interacts with MARD1/FLZ9 and RD21A via its CCCH zing finger domains.

The protein localises to the cytoplasm. It localises to the stress granule. Its subcellular location is the P-body. This is Zinc finger CCCH domain-containing protein 61 from Arabidopsis thaliana (Mouse-ear cress).